The sequence spans 107 residues: Phosphoribosyl-ATP pyrophosphatase (107 aa).

This sequence belongs to the PRA-PH family.

The protein resides in the cytoplasm. The catalysed reaction is 1-(5-phospho-beta-D-ribosyl)-ATP + H2O = 1-(5-phospho-beta-D-ribosyl)-5'-AMP + diphosphate + H(+). It functions in the pathway amino-acid biosynthesis; L-histidine biosynthesis; L-histidine from 5-phospho-alpha-D-ribose 1-diphosphate: step 2/9. The sequence is that of Phosphoribosyl-ATP pyrophosphatase from Sinorhizobium fredii (strain NBRC 101917 / NGR234).